Consider the following 332-residue polypeptide: MAVFTAVSDSDLAQWMRHYELGDVLAFRGIPSGIENSNFFLTTTRGEYVLTIFEKLTAEQLPFYLDLMSHLAGHGVPVPDPIPRDDGALFGMLHGKPAAIVTKLDGSAELAPGVEHCIEVGQMLARLHLAGRDYPRNQPNLRSLPWWQENVPAIVPFITDEQRALLEGELVHQAGFFASDDYAALPAGPCHCDLFRDNVLFAHAAPDTGHDVRLGGFFDFYFAGCDKWLFDVAVTVNDWCVDLATGVLDVARADALLRAYQTVRPFTAEERRHWSDMLRAGAYRFWVSRLYDFYLPRAAEMLKPHDPGHFERILRERIAHTPALPEIQTACN.

It belongs to the pseudomonas-type ThrB family.

It carries out the reaction L-homoserine + ATP = O-phospho-L-homoserine + ADP + H(+). Its pathway is amino-acid biosynthesis; L-threonine biosynthesis; L-threonine from L-aspartate: step 4/5. This chain is Homoserine kinase, found in Burkholderia lata (strain ATCC 17760 / DSM 23089 / LMG 22485 / NCIMB 9086 / R18194 / 383).